We begin with the raw amino-acid sequence, 124 residues long: Hemoglobin subunit alpha (124 aa).

The region spanning 1 to 124 (PLSAADKTII…VAKALSSHYR (124 aa)) is the Globin domain. Histidine 57 is a binding site for O2. Histidine 79 is a heme b binding site.

Belongs to the globin family. As to quaternary structure, hb 1 is a heterotetramer of two alpha and two beta-1 chains. Hb 2 is a heterotetramer of two alpha and two beta-2 chains. Hb 3 is a heterotetramer of two alpha and two beta-3 chains. Red blood cells (at protein level).

Functionally, involved in oxygen transport from gills to the various peripheral tissues. This chain is Hemoglobin subunit alpha, found in Somniosus microcephalus (Greenland sleeper shark).